Reading from the N-terminus, the 184-residue chain is MSWRSESIWIEFIVGSRKTSNFCWAFILFFGSLGFLLVGTSSYLGRNLISLFPSQQIVFFPQGIVMSFYGIAGLFISSYLWCTIFWNVGSGYDRFDRKEGIVCIFRWGFPGKNRRIFLRFLMKDIQSIRIEVKEGIYARRVLYMEIRGQGAVPLTRTDENLTPREIEQKAAELAYFLRVPIEVF.

A run of 2 helical transmembrane segments spans residues Phe22–Ser42 and Ile57–Ser77.

This sequence belongs to the Ycf4 family.

It is found in the plastid. Its subcellular location is the chloroplast thylakoid membrane. Seems to be required for the assembly of the photosystem I complex. The polypeptide is Photosystem I assembly protein Ycf4 (Gossypium barbadense (Sea Island cotton)).